A 449-amino-acid chain; its full sequence is UDP-N-acetylmuramate--L-alanine ligase (449 aa).

110 to 116 (GTHGKTT) is an ATP binding site.

It belongs to the MurCDEF family.

Its subcellular location is the cytoplasm. It catalyses the reaction UDP-N-acetyl-alpha-D-muramate + L-alanine + ATP = UDP-N-acetyl-alpha-D-muramoyl-L-alanine + ADP + phosphate + H(+). It functions in the pathway cell wall biogenesis; peptidoglycan biosynthesis. Its function is as follows. Cell wall formation. This is UDP-N-acetylmuramate--L-alanine ligase from Desulfitobacterium hafniense (strain Y51).